The following is a 488-amino-acid chain: Transmembrane protein 39A-B (488 aa).

Asn-31 and Asn-39 each carry an N-linked (GlcNAc...) asparagine glycan. Helical transmembrane passes span 72-92 (GLVF…TQYI), 110-130 (TSLN…VMLA), and 155-175 (LIIG…WTTV). A glycan (N-linked (GlcNAc...) asparagine) is linked at Asn-180. The chain crosses the membrane as a helical span at residues 182-202 (SVLNLLFLGYPFGVYVPLCCF). Residue Asn-206 is glycosylated (N-linked (GlcNAc...) asparagine). 4 helical membrane-spanning segments follow: residues 287–307 (EVLF…LCFV), 319–339 (CEHL…QLLP), 420–440 (LLNL…YSLL), and 446–466 (NHTL…FKLL).

This sequence belongs to the TMEM39 family.

Its subcellular location is the membrane. In Xenopus laevis (African clawed frog), this protein is Transmembrane protein 39A-B (tmem39a-b).